Here is a 184-residue protein sequence, read N- to C-terminus: Photosystem I assembly protein Ycf4 (184 aa).

2 consecutive transmembrane segments (helical) span residues 19 to 39 (ISNF…LLVG) and 57 to 77 (IVFF…LFIS).

This sequence belongs to the Ycf4 family.

The protein resides in the plastid. The protein localises to the chloroplast thylakoid membrane. Its function is as follows. Seems to be required for the assembly of the photosystem I complex. In Atropa belladonna (Belladonna), this protein is Photosystem I assembly protein Ycf4.